Reading from the N-terminus, the 243-residue chain is NAD-dependent protein deacetylase (243 aa).

Residues 1-243 (MKHDLETLKH…VSVVKSLMTE (243 aa)) form the Deacetylase sirtuin-type domain. NAD(+) is bound by residues A24, F35, R36, Q105, I107, D108, and H123. F35 contributes to the nicotinamide binding site. Nicotinamide is bound by residues I107 and D108. H123 serves as the catalytic Proton acceptor. C131, C134, C151, and C154 together coordinate Zn(2+). Residues S192, S193, N215, and D232 each coordinate NAD(+).

The protein belongs to the sirtuin family. Class U subfamily. The cofactor is Zn(2+).

It is found in the cytoplasm. The enzyme catalyses N(6)-acetyl-L-lysyl-[protein] + NAD(+) + H2O = 2''-O-acetyl-ADP-D-ribose + nicotinamide + L-lysyl-[protein]. Functionally, NAD-dependent protein deacetylase which modulates the activities of several enzymes which are inactive in their acetylated form. The chain is NAD-dependent protein deacetylase from Staphylococcus aureus (strain MRSA252).